The chain runs to 150 residues: Large ribosomal subunit protein uL13 (150 aa).

A disordered region spans residues 130-150; sequence EHPHSAQNPQVLSITTNELVK. Over residues 134 to 150 the composition is skewed to polar residues; it reads SAQNPQVLSITTNELVK.

It belongs to the universal ribosomal protein uL13 family. In terms of assembly, part of the 50S ribosomal subunit.

This protein is one of the early assembly proteins of the 50S ribosomal subunit, although it is not seen to bind rRNA by itself. It is important during the early stages of 50S assembly. The chain is Large ribosomal subunit protein uL13 from Prochlorococcus marinus (strain SARG / CCMP1375 / SS120).